The chain runs to 387 residues: GTPase Obg (387 aa).

The Obg domain maps to 1-159; it reads MKFVDEAIIR…RSLKLELLLL (159 aa). Residues 160 to 333 enclose the OBG-type G domain; the sequence is ADVGLLGMPN…LALKLLDFID (174 aa). GTP contacts are provided by residues 166-173, 191-195, 213-216, 283-286, and 314-316; these read GMPNAGKS, FTTLV, DIPG, NKAD, and SAY. The Mg(2+) site is built by Ser-173 and Thr-193.

The protein belongs to the TRAFAC class OBG-HflX-like GTPase superfamily. OBG GTPase family. As to quaternary structure, monomer. Requires Mg(2+) as cofactor.

The protein resides in the cytoplasm. Functionally, an essential GTPase which binds GTP, GDP and possibly (p)ppGpp with moderate affinity, with high nucleotide exchange rates and a fairly low GTP hydrolysis rate. Plays a role in control of the cell cycle, stress response, ribosome biogenesis and in those bacteria that undergo differentiation, in morphogenesis control. This Shewanella pealeana (strain ATCC 700345 / ANG-SQ1) protein is GTPase Obg.